A 158-amino-acid polypeptide reads, in one-letter code: MAIEGVLQEGFVTTTADKLINYMRTGSLWPMTFGLACCAVEMIHAGVSRYDLDRFGVVFRPSPRQSDVMIVAGTLTNKMAPALRKVYDQMAEPRWVISMGSCANGGGYYHYSYSVVRGCDRIVPVDIYVPGCPPTAEALIYGIIQLQNKIRRTNTIAR.

The [4Fe-4S] cluster site is built by cysteine 37, cysteine 38, cysteine 102, and cysteine 132.

The protein belongs to the complex I 20 kDa subunit family. As to quaternary structure, NDH-1 is composed of 14 different subunits. Subunits NuoB, C, D, E, F, and G constitute the peripheral sector of the complex. [4Fe-4S] cluster is required as a cofactor.

It localises to the cell inner membrane. The catalysed reaction is a quinone + NADH + 5 H(+)(in) = a quinol + NAD(+) + 4 H(+)(out). In terms of biological role, NDH-1 shuttles electrons from NADH, via FMN and iron-sulfur (Fe-S) centers, to quinones in the respiratory chain. Couples the redox reaction to proton translocation (for every two electrons transferred, four hydrogen ions are translocated across the cytoplasmic membrane), and thus conserves the redox energy in a proton gradient. In Dechloromonas aromatica (strain RCB), this protein is NADH-quinone oxidoreductase subunit B.